The sequence spans 362 residues: Heme A synthase (362 aa).

5 consecutive transmembrane segments (helical) span residues 10-30 (LAAI…MVLV), 102-122 (VIGM…AVSG), 128-148 (LWLI…MVAS), 159-179 (VRLA…VWTL), and 198-218 (AWGL…VAGL). His-262 contacts heme. 3 helical membrane-spanning segments follow: residues 266–286 (AYTL…AGAG), 297–317 (LAAI…VVPI), and 318–338 (SLAL…VLQA). Heme is bound at residue His-323.

Belongs to the COX15/CtaA family. Type 2 subfamily. In terms of assembly, interacts with CtaB. Heme b serves as cofactor.

The protein resides in the cell membrane. It catalyses the reaction Fe(II)-heme o + 2 A + H2O = Fe(II)-heme a + 2 AH2. Its pathway is porphyrin-containing compound metabolism; heme A biosynthesis; heme A from heme O: step 1/1. In terms of biological role, catalyzes the conversion of heme O to heme A by two successive hydroxylations of the methyl group at C8. The first hydroxylation forms heme I, the second hydroxylation results in an unstable dihydroxymethyl group, which spontaneously dehydrates, resulting in the formyl group of heme A. This chain is Heme A synthase, found in Bradyrhizobium sp. (strain BTAi1 / ATCC BAA-1182).